We begin with the raw amino-acid sequence, 108 residues long: MNEPTRTYLESEKDTQDQIEELQATCIVKNAAGIHVRPAGVIVRLFDGEPCDVHFTYAGKTINAKSIMSILMLGAPQGGEILVTIRSKEAHRILQKIQDAFSSGFGEL.

The HPr domain occupies 21 to 108; sequence ELQATCIVKN…DAFSSGFGEL (88 aa). The Pros-phosphohistidine intermediate role is filled by H35.

Belongs to the HPr family.

It localises to the cytoplasm. General (non sugar-specific) component of the phosphoenolpyruvate-dependent sugar phosphotransferase system (sugar PTS). This major carbohydrate active-transport system catalyzes the phosphorylation of incoming sugar substrates concomitantly with their translocation across the cell membrane. The phosphoryl group from phosphoenolpyruvate (PEP) is transferred to the phosphoryl carrier protein HPr by enzyme I. Phospho-HPr then transfers it to the PTS EIIA domain. This chain is Phosphocarrier protein HPr (ptsH), found in Chlamydia pneumoniae (Chlamydophila pneumoniae).